The sequence spans 120 residues: UPF0091 protein PH1455 (120 aa).

Belongs to the UPF0091 family.

The sequence is that of UPF0091 protein PH1455 from Pyrococcus horikoshii (strain ATCC 700860 / DSM 12428 / JCM 9974 / NBRC 100139 / OT-3).